Reading from the N-terminus, the 100-residue chain is UPF0473 protein Csac_1599 (100 aa).

The protein belongs to the UPF0473 family.

In Caldicellulosiruptor saccharolyticus (strain ATCC 43494 / DSM 8903 / Tp8T 6331), this protein is UPF0473 protein Csac_1599.